The chain runs to 182 residues: Orotate phosphoribosyltransferase (182 aa).

5-phospho-alpha-D-ribose 1-diphosphate-binding positions include arginine 96, lysine 97, lysine 100, histidine 102, and 122-130; that span reads EDTSTTGGS. Positions 126 and 154 each coordinate orotate.

The protein belongs to the purine/pyrimidine phosphoribosyltransferase family. PyrE subfamily. In terms of assembly, homodimer. Mg(2+) is required as a cofactor.

It carries out the reaction orotidine 5'-phosphate + diphosphate = orotate + 5-phospho-alpha-D-ribose 1-diphosphate. Its pathway is pyrimidine metabolism; UMP biosynthesis via de novo pathway; UMP from orotate: step 1/2. Catalyzes the transfer of a ribosyl phosphate group from 5-phosphoribose 1-diphosphate to orotate, leading to the formation of orotidine monophosphate (OMP). The sequence is that of Orotate phosphoribosyltransferase from Streptomyces coelicolor (strain ATCC BAA-471 / A3(2) / M145).